The sequence spans 364 residues: 3-isopropylmalate dehydrogenase (364 aa).

77–90 (GPKWDNLPTDKRPE) is a binding site for NAD(+). Residues Arg-97, Arg-107, Arg-135, and Asp-224 each coordinate substrate. Asp-224, Asp-248, and Asp-252 together coordinate Mg(2+). 281–293 (GSAPDIAGKGIAN) is an NAD(+) binding site.

The protein belongs to the isocitrate and isopropylmalate dehydrogenases family. LeuB type 1 subfamily. In terms of assembly, homodimer. Mg(2+) serves as cofactor. Mn(2+) is required as a cofactor.

It localises to the cytoplasm. It carries out the reaction (2R,3S)-3-isopropylmalate + NAD(+) = 4-methyl-2-oxopentanoate + CO2 + NADH. Its pathway is amino-acid biosynthesis; L-leucine biosynthesis; L-leucine from 3-methyl-2-oxobutanoate: step 3/4. Its function is as follows. Catalyzes the oxidation of 3-carboxy-2-hydroxy-4-methylpentanoate (3-isopropylmalate) to 3-carboxy-4-methyl-2-oxopentanoate. The product decarboxylates to 4-methyl-2 oxopentanoate. This Aquifex aeolicus (strain VF5) protein is 3-isopropylmalate dehydrogenase (leuB).